The following is a 225-amino-acid chain: Uridylate kinase (225 aa).

Residue 9-10 (GS) coordinates ATP. G44 is a UMP binding site. Residues G45 and R49 each contribute to the ATP site. Residues D66 and 114–120 (THPGHTT) contribute to the UMP site. The ATP site is built by T140, N141, Y146, and D149.

Belongs to the UMP kinase family. In terms of assembly, homohexamer.

The protein localises to the cytoplasm. The enzyme catalyses UMP + ATP = UDP + ADP. Its pathway is pyrimidine metabolism; CTP biosynthesis via de novo pathway; UDP from UMP (UMPK route): step 1/1. With respect to regulation, inhibited by UTP. Its function is as follows. Catalyzes the reversible phosphorylation of UMP to UDP. This Pyrococcus abyssi (strain GE5 / Orsay) protein is Uridylate kinase.